The chain runs to 237 residues: Trypsin-1 (237 aa).

A Peptidase S1 domain is found at 1–237; it reads IVGGTDAVLG…HVDWIKANAV (237 aa). Residues cysteine 30 and cysteine 46 are joined by a disulfide bond. Residue histidine 45 is the Charge relay system of the active site. Glutamate 64, valine 69, and glutamate 74 together coordinate Ca(2+). Catalysis depends on aspartate 96, which acts as the Charge relay system. Disulfide bonds link cysteine 159–cysteine 174 and cysteine 185–cysteine 213. The Charge relay system role is filled by serine 189.

It belongs to the peptidase S1 family. The cofactor is Ca(2+).

It is found in the secreted. The protein localises to the extracellular space. It catalyses the reaction Preferential cleavage: Arg-|-Xaa, Lys-|-Xaa.. This Astacus astacus (Noble crayfish) protein is Trypsin-1.